The chain runs to 167 residues: Interferon gamma (167 aa).

The N-terminal stretch at 1–23 (MNYTSFIFAFQLCIILCSSGYYC) is a signal peptide. The residue at position 24 (glutamine 24) is a Pyrrolidone carboxylic acid. N-linked (GlcNAc...) asparagine glycosylation is found at asparagine 39 and asparagine 107.

Belongs to the type II (or gamma) interferon family. In terms of assembly, homodimer. Interacts with IFNGR1 (via extracellular domain); this interaction promotes IFNGR1 dimerization. Released primarily from activated T lymphocytes.

It localises to the secreted. In terms of biological role, type II interferon produced by immune cells such as T-cells and NK cells that plays crucial roles in antimicrobial, antiviral, and antitumor responses by activating effector immune cells and enhancing antigen presentation. Primarily signals through the JAK-STAT pathway after interaction with its receptor IFNGR1 to affect gene regulation. Upon IFNG binding, IFNGR1 intracellular domain opens out to allow association of downstream signaling components JAK2, JAK1 and STAT1, leading to STAT1 activation, nuclear translocation and transcription of IFNG-regulated genes. Many of the induced genes are transcription factors such as IRF1 that are able to further drive regulation of a next wave of transcription. Plays a role in class I antigen presentation pathway by inducing a replacement of catalytic proteasome subunits with immunoproteasome subunits. In turn, increases the quantity, quality, and repertoire of peptides for class I MHC loading. Increases the efficiency of peptide generation also by inducing the expression of activator PA28 that associates with the proteasome and alters its proteolytic cleavage preference. Up-regulates as well MHC II complexes on the cell surface by promoting expression of several key molecules such as cathepsins B/CTSB, H/CTSH, and L/CTSL. Participates in the regulation of hematopoietic stem cells during development and under homeostatic conditions by affecting their development, quiescence, and differentiation. This chain is Interferon gamma (IFNG), found in Felis catus (Cat).